Consider the following 231-residue polypeptide: Uridylate kinase (231 aa).

ATP is bound at residue 6–9 (KLSG). The involved in allosteric activation by GTP stretch occupies residues 14–19 (GEGGRG). Glycine 49 and arginine 53 together coordinate ATP. UMP is bound by residues aspartate 66 and 127-134 (TSNPFFTT). Residues threonine 154, tyrosine 160, and aspartate 163 each contribute to the ATP site.

The protein belongs to the UMP kinase family. Homohexamer.

Its subcellular location is the cytoplasm. It catalyses the reaction UMP + ATP = UDP + ADP. The protein operates within pyrimidine metabolism; CTP biosynthesis via de novo pathway; UDP from UMP (UMPK route): step 1/1. Allosterically activated by GTP. Inhibited by UTP. Functionally, catalyzes the reversible phosphorylation of UMP to UDP. This is Uridylate kinase from Thermotoga maritima (strain ATCC 43589 / DSM 3109 / JCM 10099 / NBRC 100826 / MSB8).